A 637-amino-acid polypeptide reads, in one-letter code: 1-deoxy-D-xylulose-5-phosphate synthase 1 (637 aa).

Residues histidine 74 and 115–117 contribute to the thiamine diphosphate site; that span reads GHS. Mg(2+) is bound at residue aspartate 146. Residues 147 to 148, asparagine 175, tyrosine 286, and glutamate 368 each bind thiamine diphosphate; that span reads GS. Asparagine 175 contributes to the Mg(2+) binding site.

Belongs to the transketolase family. DXPS subfamily. In terms of assembly, homodimer. Requires Mg(2+) as cofactor. Thiamine diphosphate serves as cofactor.

The enzyme catalyses D-glyceraldehyde 3-phosphate + pyruvate + H(+) = 1-deoxy-D-xylulose 5-phosphate + CO2. The protein operates within metabolic intermediate biosynthesis; 1-deoxy-D-xylulose 5-phosphate biosynthesis; 1-deoxy-D-xylulose 5-phosphate from D-glyceraldehyde 3-phosphate and pyruvate: step 1/1. Functionally, catalyzes the acyloin condensation reaction between C atoms 2 and 3 of pyruvate and glyceraldehyde 3-phosphate to yield 1-deoxy-D-xylulose-5-phosphate (DXP). The chain is 1-deoxy-D-xylulose-5-phosphate synthase 1 from Geobacter sulfurreducens (strain ATCC 51573 / DSM 12127 / PCA).